The following is a 334-amino-acid chain: Holliday junction branch migration complex subunit RuvB (334 aa).

Residues 4–184 form a large ATPase domain (RuvB-L) region; the sequence is ADRLIAADAQ…FGIVQRLEFY (181 aa). Residues I23, R24, G65, K68, T69, T70, 131 to 133, R174, Y184, and R221 each bind ATP; that span reads EDY. Residue T69 participates in Mg(2+) binding. The small ATPAse domain (RuvB-S) stretch occupies residues 185-255; sequence QVADLQHIVG…VAAQALNMLD (71 aa). A head domain (RuvB-H) region spans residues 258–334; it reads AAGFDYMDRK…YQHFGIDRAE (77 aa). DNA is bound by residues R294, R313, and R318.

This sequence belongs to the RuvB family. In terms of assembly, homohexamer. Forms an RuvA(8)-RuvB(12)-Holliday junction (HJ) complex. HJ DNA is sandwiched between 2 RuvA tetramers; dsDNA enters through RuvA and exits via RuvB. An RuvB hexamer assembles on each DNA strand where it exits the tetramer. Each RuvB hexamer is contacted by two RuvA subunits (via domain III) on 2 adjacent RuvB subunits; this complex drives branch migration. In the full resolvosome a probable DNA-RuvA(4)-RuvB(12)-RuvC(2) complex forms which resolves the HJ.

The protein localises to the cytoplasm. It carries out the reaction ATP + H2O = ADP + phosphate + H(+). Functionally, the RuvA-RuvB-RuvC complex processes Holliday junction (HJ) DNA during genetic recombination and DNA repair, while the RuvA-RuvB complex plays an important role in the rescue of blocked DNA replication forks via replication fork reversal (RFR). RuvA specifically binds to HJ cruciform DNA, conferring on it an open structure. The RuvB hexamer acts as an ATP-dependent pump, pulling dsDNA into and through the RuvAB complex. RuvB forms 2 homohexamers on either side of HJ DNA bound by 1 or 2 RuvA tetramers; 4 subunits per hexamer contact DNA at a time. Coordinated motions by a converter formed by DNA-disengaged RuvB subunits stimulates ATP hydrolysis and nucleotide exchange. Immobilization of the converter enables RuvB to convert the ATP-contained energy into a lever motion, pulling 2 nucleotides of DNA out of the RuvA tetramer per ATP hydrolyzed, thus driving DNA branch migration. The RuvB motors rotate together with the DNA substrate, which together with the progressing nucleotide cycle form the mechanistic basis for DNA recombination by continuous HJ branch migration. Branch migration allows RuvC to scan DNA until it finds its consensus sequence, where it cleaves and resolves cruciform DNA. This chain is Holliday junction branch migration complex subunit RuvB, found in Edwardsiella ictaluri (strain 93-146).